A 253-amino-acid chain; its full sequence is MANLGCWMLVLFVATWSDLGLCKKRPKPGGWNTGGSRYPGQGSPGGNRYPPQGGGGWGQPHGGGWGQPHGGGWGQPHGGGWGQPHGGGWGQGGGTHSQWNKPSKPKTSMKHMAGAAAAGAVVGGLGGYMLGSAMSRPLIHFGNDYEDRYYRENMYRYPNQVYYRPVDQYSNQNNFVHDCVNITIKQHTVTTTTKGENFTETDVKMMERVVEQMCITQYEKESQAYYQRGSSMVLFSSPPVILLISFLIFLIVG.

A signal peptide spans 1 to 22 (MANLGCWMLVLFVATWSDLGLC). The interval 23–38 (KKRPKPGGWNTGGSRY) is interaction with ADGRG6. The interval 23–230 (KKRPKPGGWN…ESQAYYQRGS (208 aa)) is interaction with GRB2, ERI3 and SYN1. The disordered stretch occupies residues 26–108 (PKPGGWNTGG…WNKPSKPKTS (83 aa)). Tandem repeats lie at residues 51–59 (PQGGGGWGQ), 60–67 (PHGGGWGQ), 68–75 (PHGGGWGQ), 76–83 (PHGGGWGQ), and 84–91 (PHGGGWGQ). A 5 X 8 AA tandem repeats of P-H-G-G-G-W-G-Q region spans residues 51–91 (PQGGGGWGQPHGGGWGQPHGGGWGQPHGGGWGQPHGGGWGQ). Over residues 52 to 95 (QGGGGWGQPHGGGWGQPHGGGWGQPHGGGWGQPHGGGWGQGGGT) the composition is skewed to gly residues. Cu(2+)-binding residues include histidine 61, glycine 62, glycine 63, histidine 69, glycine 70, glycine 71, histidine 77, glycine 78, glycine 79, histidine 85, glycine 86, and glycine 87. Cysteines 179 and 214 form a disulfide. N-linked (GlcNAc...) asparagine glycans are attached at residues asparagine 181 and asparagine 197. Serine 230 is lipidated: GPI-anchor amidated serine. Positions 231–253 (SMVLFSSPPVILLISFLIFLIVG) are cleaved as a propeptide — removed in mature form.

The protein belongs to the prion family. As to quaternary structure, monomer and homodimer. Has a tendency to aggregate into amyloid fibrils containing a cross-beta spine, formed by a steric zipper of superposed beta-strands. Soluble oligomers may represent an intermediate stage on the path to fibril formation. Copper binding may promote oligomerization. Interacts with GRB2, APP, ERI3/PRNPIP and SYN1. Mislocalized cytosolically exposed PrP interacts with MGRN1; this interaction alters MGRN1 subcellular location and causes lysosomal enlargement. Interacts with APP. Interacts with KIAA1191. Interacts with ADGRG6.

The protein localises to the cell membrane. It is found in the golgi apparatus. In terms of biological role, its primary physiological function is unclear. May play a role in neuronal development and synaptic plasticity. May be required for neuronal myelin sheath maintenance. May promote myelin homeostasis through acting as an agonist for ADGRG6 receptor. May play a role in iron uptake and iron homeostasis. Soluble oligomers are toxic to cultured neuroblastoma cells and induce apoptosis (in vitro). Association with GPC1 (via its heparan sulfate chains) targets PRNP to lipid rafts. Also provides Cu(2+) or Zn(2+) for the ascorbate-mediated GPC1 deaminase degradation of its heparan sulfate side chains. The protein is Major prion protein (PRNP) of Colobus guereza (Mantled guereza).